The primary structure comprises 223 residues: Ribonuclease T (223 aa).

In terms of domain architecture, Exonuclease spans 20–194 (VVIDVETAGF…YDTNQTALLF (175 aa)). Asp-23, Glu-25, His-181, and Asp-186 together coordinate Mg(2+). The active-site Proton donor/acceptor is His-181.

Belongs to the RNase T family. Homodimer. Requires Mg(2+) as cofactor.

Trims short 3' overhangs of a variety of RNA species, leaving a one or two nucleotide 3' overhang. Responsible for the end-turnover of tRNA: specifically removes the terminal AMP residue from uncharged tRNA (tRNA-C-C-A). Also appears to be involved in tRNA biosynthesis. This chain is Ribonuclease T, found in Pectobacterium atrosepticum (strain SCRI 1043 / ATCC BAA-672) (Erwinia carotovora subsp. atroseptica).